A 132-amino-acid chain; its full sequence is Small ribosomal subunit protein uS8 (132 aa).

Belongs to the universal ribosomal protein uS8 family. Part of the 30S ribosomal subunit. Contacts proteins S5 and S12.

In terms of biological role, one of the primary rRNA binding proteins, it binds directly to 16S rRNA central domain where it helps coordinate assembly of the platform of the 30S subunit. This Coprothermobacter proteolyticus (strain ATCC 35245 / DSM 5265 / OCM 4 / BT) protein is Small ribosomal subunit protein uS8.